Here is a 243-residue protein sequence, read N- to C-terminus: tRNA (guanine-N(1)-)-methyltransferase (243 aa).

S-adenosyl-L-methionine-binding positions include Gly-112 and 131-136 (LGDYVL).

Belongs to the RNA methyltransferase TrmD family. In terms of assembly, homodimer.

The protein resides in the cytoplasm. The enzyme catalyses guanosine(37) in tRNA + S-adenosyl-L-methionine = N(1)-methylguanosine(37) in tRNA + S-adenosyl-L-homocysteine + H(+). Its function is as follows. Specifically methylates guanosine-37 in various tRNAs. The polypeptide is tRNA (guanine-N(1)-)-methyltransferase (Leuconostoc mesenteroides subsp. mesenteroides (strain ATCC 8293 / DSM 20343 / BCRC 11652 / CCM 1803 / JCM 6124 / NCDO 523 / NBRC 100496 / NCIMB 8023 / NCTC 12954 / NRRL B-1118 / 37Y)).